Here is a 401-residue protein sequence, read N- to C-terminus: Protein IQ-DOMAIN 24 (401 aa).

The interval 1-48 (MGFFGRLFGSKKQEKATPNRRRWSFATRSSHPENDSSSHSSKRRGDED) is disordered. Positions 105–121 (EYKAAMKIQSAFRGYLA) are calmodulin-binding. IQ domains lie at 105–133 (EYKA…ALVK) and 134–156 (LQAL…RMQT). Low complexity-rich tracts occupy residues 165-176 (RASRSSHVSDSS) and 278-287 (RSRTGSSSGG). Disordered regions lie at residues 165–186 (RASR…IPSS) and 258–296 (SPRK…PFTP).

Belongs to the IQD family. In terms of assembly, binds to multiple calmodulin (CaM) in the presence of Ca(2+) and CaM-like proteins.

The protein localises to the nucleus. It localises to the nuclear body. Its subcellular location is the cell membrane. Its function is as follows. May be involved in cooperative interactions with calmodulins or calmodulin-like proteins. Recruits calmodulin proteins to microtubules, thus being a potential scaffold in cellular signaling and trafficking. May associate with nucleic acids and regulate gene expression at the transcriptional or post-transcriptional level. The sequence is that of Protein IQ-DOMAIN 24 from Arabidopsis thaliana (Mouse-ear cress).